A 411-amino-acid chain; its full sequence is Arginase (411 aa).

A disordered region spans residues 83-106; the sequence is NNYINNNDNNNDNNNDNNNDNNNN. Positions 193, 216, 218, and 220 each coordinate Mn(2+). Residues N222, S229, and D274 each contribute to the L-arginine site. Positions 323 and 325 each coordinate Mn(2+).

The protein belongs to the arginase family. Homotrimer; oligomerization is dependent on Mn(2+) binding. The cofactor is Mn(2+).

It carries out the reaction L-arginine + H2O = urea + L-ornithine. It participates in nitrogen metabolism; urea cycle; L-ornithine and urea from L-arginine: step 1/1. Its activity is regulated as follows. Feedback inhibition by product L-ornithine,. Inhibited by 2(S)-amino-6-boronohexanoic acid (ABH); however, with less efficiency than human ARG1. Functionally, catalyzes the hydrolysis of L-arginine into urea and L-ornithine, which is a precursor for polyamine biosynthesis. May play a role in parasite intra-hepatic development during the host liver stage. This chain is Arginase, found in Plasmodium falciparum (isolate 3D7).